We begin with the raw amino-acid sequence, 289 residues long: Diaminopimelate epimerase (289 aa).

Substrate-binding residues include Asn-13, Gln-47, and Asn-67. Cys-76 functions as the Proton donor in the catalytic mechanism. Residues 77–78, Asn-167, Asn-200, and 218–219 each bind substrate; these read GN and ER. Catalysis depends on Cys-227, which acts as the Proton acceptor. Residue 228–229 coordinates substrate; that stretch reads GT.

This sequence belongs to the diaminopimelate epimerase family. Homodimer.

The protein localises to the cytoplasm. The enzyme catalyses (2S,6S)-2,6-diaminopimelate = meso-2,6-diaminopimelate. It participates in amino-acid biosynthesis; L-lysine biosynthesis via DAP pathway; DL-2,6-diaminopimelate from LL-2,6-diaminopimelate: step 1/1. In terms of biological role, catalyzes the stereoinversion of LL-2,6-diaminopimelate (L,L-DAP) to meso-diaminopimelate (meso-DAP), a precursor of L-lysine and an essential component of the bacterial peptidoglycan. The protein is Diaminopimelate epimerase of Burkholderia mallei (strain NCTC 10247).